Here is a 364-residue protein sequence, read N- to C-terminus: UDP-N-acetylglucosamine--N-acetylmuramyl-(pentapeptide) pyrophosphoryl-undecaprenol N-acetylglucosamine transferase (364 aa).

UDP-N-acetyl-alpha-D-glucosamine-binding positions include 10–12, Asn-128, Arg-170, Ser-199, Ile-250, and Gln-295; that span reads TGG.

Belongs to the glycosyltransferase 28 family. MurG subfamily.

It is found in the cell inner membrane. The enzyme catalyses di-trans,octa-cis-undecaprenyl diphospho-N-acetyl-alpha-D-muramoyl-L-alanyl-D-glutamyl-meso-2,6-diaminopimeloyl-D-alanyl-D-alanine + UDP-N-acetyl-alpha-D-glucosamine = di-trans,octa-cis-undecaprenyl diphospho-[N-acetyl-alpha-D-glucosaminyl-(1-&gt;4)]-N-acetyl-alpha-D-muramoyl-L-alanyl-D-glutamyl-meso-2,6-diaminopimeloyl-D-alanyl-D-alanine + UDP + H(+). Its pathway is cell wall biogenesis; peptidoglycan biosynthesis. Functionally, cell wall formation. Catalyzes the transfer of a GlcNAc subunit on undecaprenyl-pyrophosphoryl-MurNAc-pentapeptide (lipid intermediate I) to form undecaprenyl-pyrophosphoryl-MurNAc-(pentapeptide)GlcNAc (lipid intermediate II). This chain is UDP-N-acetylglucosamine--N-acetylmuramyl-(pentapeptide) pyrophosphoryl-undecaprenol N-acetylglucosamine transferase, found in Chlorobium phaeobacteroides (strain DSM 266 / SMG 266 / 2430).